Consider the following 848-residue polypeptide: Translation initiation factor IF-2 (848 aa).

A disordered region spans residues 90-253; the sequence is RTYIKRAELQ…PKEKRHAFER (164 aa). Low complexity predominate over residues 105-170; it reads EAPAPEEPVQ…SAEPAIAPED (66 aa). Composition is skewed to basic residues over residues 204–215 and 236–248; these read PKKKQAGHRGPR and KPLR…KEKR. The region spanning 344–511 is the tr-type G domain; that stretch reads KRAPVVSVMG…AVLLQAEILE (168 aa). A G1 region spans residues 353-360; the sequence is GHVDHGKT. 353–360 is a GTP binding site; that stretch reads GHVDHGKT. The tract at residues 378–382 is G2; it reads GITQH. The tract at residues 399-402 is G3; it reads DTPG. GTP is bound by residues 399 to 403 and 453 to 456; these read DTPGH and NKMD. Residues 453–456 are G4; sequence NKMD. Positions 489–491 are G5; sequence SAH.

This sequence belongs to the TRAFAC class translation factor GTPase superfamily. Classic translation factor GTPase family. IF-2 subfamily.

It is found in the cytoplasm. Its function is as follows. One of the essential components for the initiation of protein synthesis. Protects formylmethionyl-tRNA from spontaneous hydrolysis and promotes its binding to the 30S ribosomal subunits. Also involved in the hydrolysis of GTP during the formation of the 70S ribosomal complex. This is Translation initiation factor IF-2 from Marinobacter nauticus (strain ATCC 700491 / DSM 11845 / VT8) (Marinobacter aquaeolei).